Here is a 498-residue protein sequence, read N- to C-terminus: Fascin-3 (498 aa).

Belongs to the fascin family. Expressed in testis.

It is found in the cytoplasm. The protein resides in the cytoskeleton. In terms of biological role, acts as an actin bundling protein. The polypeptide is Fascin-3 (FSCN3) (Homo sapiens (Human)).